The chain runs to 482 residues: tRNA sulfurtransferase (482 aa).

In terms of domain architecture, THUMP spans 61–165 (LAIRDALTRI…DDRLLLIKGR (105 aa)). Residues 183–184 (LI), Lys265, Gly287, and Gln296 contribute to the ATP site. The cysteines at positions 344 and 456 are disulfide-linked. The Rhodanese domain maps to 404 to 482 (FGPNDVILDI…GFNNVKVYRL (79 aa)). Catalysis depends on Cys456, which acts as the Cysteine persulfide intermediate.

The protein belongs to the ThiI family.

It localises to the cytoplasm. The enzyme catalyses [ThiI sulfur-carrier protein]-S-sulfanyl-L-cysteine + a uridine in tRNA + 2 reduced [2Fe-2S]-[ferredoxin] + ATP + H(+) = [ThiI sulfur-carrier protein]-L-cysteine + a 4-thiouridine in tRNA + 2 oxidized [2Fe-2S]-[ferredoxin] + AMP + diphosphate. It carries out the reaction [ThiS sulfur-carrier protein]-C-terminal Gly-Gly-AMP + S-sulfanyl-L-cysteinyl-[cysteine desulfurase] + AH2 = [ThiS sulfur-carrier protein]-C-terminal-Gly-aminoethanethioate + L-cysteinyl-[cysteine desulfurase] + A + AMP + 2 H(+). Its pathway is cofactor biosynthesis; thiamine diphosphate biosynthesis. In terms of biological role, catalyzes the ATP-dependent transfer of a sulfur to tRNA to produce 4-thiouridine in position 8 of tRNAs, which functions as a near-UV photosensor. Also catalyzes the transfer of sulfur to the sulfur carrier protein ThiS, forming ThiS-thiocarboxylate. This is a step in the synthesis of thiazole, in the thiamine biosynthesis pathway. The sulfur is donated as persulfide by IscS. This is tRNA sulfurtransferase from Shigella boydii serotype 18 (strain CDC 3083-94 / BS512).